We begin with the raw amino-acid sequence, 1651 residues long: MEGMALYLVAALLIGFPGSSHGALYTLITPGVLRTDTEEQILVEAHGDSAPKQPVISIHDFPRRQKILFQIRVDMNPAGGMLVTPTIKIPAKELNKESRQNQYVVVKVSGLPLELEKVVLLSSQSGFVFIQTDKGIYTPGSLVRYRVFSMDYNMHRMDKTVIVEFQTPEGVVVSSNPINPSSVLIRHYNLSELVSFGTWKAVAKYEHSPEESYTAYFDVREYVLPSFEVRLQPSDKFLYIDGNKNFHVSITARYLYGKKVEGVAFVLFGVKIDDAKKSIPDSLTRIPIIDGDGEAILKRDILRSRFQNLNELVGHTLYASVTVMTESGSDMVVTEQSGIHIVTSPYQIYFTKPPKYFKPGMPYELTVYVTNPDGSPAANVPVVSEAIHSEGTTLSDGTAKLILNTPLNTQSLPITVRTNHRDLPRERQATKSMTATAYQTQGGSGNYLHVAITSTEIKAGDNLPVSFNVRGNANSLNQIKYFTYLILTKGKIFKVGRQPRGEGQNLVTMNLRITPDLIPAFRFVAYYQVGNNEIVADSVWVDVKDTCMGMLVVKGASSRDNRIQKPGAAMKIKLEGDPGARVGLVAVDKAVYVLNDKYKISQAKIWDTIEKSDFGCTAGGGQDNLGVFEDAGLALTTSTNLNTKQRSVATCPQPTNRRRRSSVLLLDSKASKAAQFQEQNLHKCCEDGMHENPMGYTCEKRAKYTQEGDACKAAFLECCRYIKGIRDENQRESELFLARSDFEDEFFEEDNIISRSDFPDSWLWLTEDLNEPPNSQGISSKTLSFYLKDSITTWEVLAVSIAPTKGICVAEPYEITVMKDFFIDLRVPYSVVKNEQVEIRAVLYNYADEDIYVRVELLYNPAFCSASAEGQRYRVQVPVRALSSWAVPFVIVPLEQGLHDVEVKASVRGELASDGVRKKLKVVPEGERKNIVTVIELDPSVKGVGGTQEQTVVANKLDDKVPETEIETKFSVLGDPVAQIIENSIDGSKLSHLIITPSGSGEQNMITMTPSVIATYYLDATGQWENLGVDRRTEAVKQIMKGYAQQMVYKKADHSYASFVNRASSSWLTAYVVKVFAMAAKMVKDINHEIICGGVKWLILNRQQSDGVFKENAPVILGGMMGGTQGAEPEVSLTAFILVALLESRSVCNEHINILDNSINKATDYLLKKYEKLQRPYTTALTAYALAAAERLNDDRVLMAASTGRDRWEEHARTHNIEGTSYALLALLKMKKFAEAGPVVKWLIDQKYYGGTYGQTQATVMVFQALAEYEIQIPTHKDLNLNISINLPEREVPLRYSINYGNALVARTAETKLNEDFTVSASGDGKATMTILTVYNAQLREDANVCNKFHLNVSVENAQLNSKQAKGAKDTLRLKICTRYLGEVDSTMTIIDVSMLTGFLPDTEDLTRLSKGVDRYISKFEIDNNMVQKGTVVIYLDKVSHSEVECLNFKIHKHFEVGFIQPGPVKVYSYYNLDEQCTKFYHPDKGTGLLNKICHGNICRCAEQSCSLLNQQKKIDLPLRIQKACAPNVDYVYKAKLLRIEEKDGNDIYVMDVLEVIKGGTDRNPQAKARQYVSQRKCQEALNLNLNNDYLIWGLSSDLWPMKNDISYLITKNTWIERWPNEDECQDEEFQNLCDDFAQLSNTLTIFGCPT.

An N-terminal signal peptide occupies residues 1–22 (MEGMALYLVAALLIGFPGSSHG). Asn189 carries an N-linked (GlcNAc...) asparagine glycan. 4 residues coordinate Mg(2+): Pro519, Asp542, Val543, and Asp545. Intrachain disulfides connect Cys547/Cys808, Cys616/Cys651, Cys684/Cys711, Cys685/Cys718, Cys698/Cys719, Cys864/Cys1501, Cys1346/Cys1477, Cys1377/Cys1446, Cys1494/Cys1499, Cys1506/Cys1578, Cys1525/Cys1649, and Cys1625/Cys1634. A propeptide spanning residues 657–739 (RRRRSSVLLL…QRESELFLAR (83 aa)) is cleaved from the precursor. Residues 661–739 (SSVLLLDSKA…QRESELFLAR (79 aa)) are C3a-like domain. One can recognise an Anaphylatoxin-like domain in the interval 684–719 (CCEDGMHENPMGYTCEKRAKYTQEGDACKAAFLECC). Positions 743-754 (EDEFFEEDNIIS) are factor B binding site. Residues 992–1269 (HLIITPSGSG…VMVFQALAEY (278 aa)) constitute a propeptide that is removed on maturation. Positions 992 to 1269 (HLIITPSGSG…VMVFQALAEY (278 aa)) are C3d-like domain. Residues 1197 to 1259 (VLMAASTGRD…GGTYGQTQAT (63 aa)) form a factor H binding site region. 2 N-linked (GlcNAc...) asparagine glycosylation sites follow: Asn1282 and Asn1352. The 144-residue stretch at 1506 to 1649 (CSLLNQQKKI…LSNTLTIFGC (144 aa)) folds into the NTR domain.

Belongs to the venom complement C3 homolog family. As to quaternary structure, heterotrimer of alpha, beta and gamma chains; disulfide-linked. Is active with factor B in the presence of factor D. Post-translationally, first processed by the removal of 4 Arg residues by furin-type protease, forming two chains, alpha and gamma/beta precursor, linked by a disulfide bond. This mature AVF is composed of three chains: alpha, gamma and beta. Expressed by the venom gland.

The protein resides in the secreted. Its function is as follows. Complement-activating protein in snake venom. It is a structural and functional analog of complement component C3b, the activated form of C3. It binds factor B (CFB), which is subsequently cleaved by factor D (CFD) to form the bimolecular complex AVF/Bb. AVF/Bb is a C3 convertase that cleaves complement component C3, but not C5 (as do CVF/Bb). This chain is A.superbus venom factor 2, found in Austrelaps superbus (Lowland copperhead snake).